The primary structure comprises 657 residues: Bifunctional lysine-specific demethylase and histidyl-hydroxylase NO66 (657 aa).

2 disordered regions span residues 1 to 141 (MQKA…QTSP) and 165 to 198 (KSCP…NSNE). The span at 32–41 (SAKTVDTVTD) shows a compositional bias: polar residues. The span at 55–71 (AEKERRKYLQARVRAEG) shows a compositional bias: basic and acidic residues. 2 stretches are compositionally biased toward polar residues: residues 73–84 (SASTSSKSNATR) and 132–141 (RSQGLEQTSP). S133 is modified (phosphoserine). A Phosphothreonine modification is found at T139. S140 is modified (phosphoserine). The JmjC domain maps to 315-454 (NPSTYLLGLR…NLLETLMPIV (140 aa)). Positions 355, 357, and 420 each coordinate Fe cation.

It belongs to the ROX family. NO66 subfamily. The cofactor is Fe(2+).

The protein localises to the nucleus. The catalysed reaction is N(6),N(6)-dimethyl-L-lysyl(36)-[histone H3] + 2 2-oxoglutarate + 2 O2 = L-lysyl(36)-[histone H3] + 2 formaldehyde + 2 succinate + 2 CO2. In terms of biological role, oxygenase that can act as both a histone lysine demethylase and a ribosomal histidine hydroxylase. Specifically demethylates 'Lys-4' (H3K4me) and 'Lys-36' (H3K36me) of histone H3, thereby playing a central role in histone code. The sequence is that of Bifunctional lysine-specific demethylase and histidyl-hydroxylase NO66 from Drosophila erecta (Fruit fly).